Here is a 418-residue protein sequence, read N- to C-terminus: Tyrosine--tRNA ligase (418 aa).

Residue Y34 coordinates L-tyrosine. Residues P39–H48 carry the 'HIGH' region motif. L-tyrosine is bound by residues Y169 and Q173. Residues K229–S233 carry the 'KMSKS' region motif. K232 serves as a coordination point for ATP. In terms of domain architecture, S4 RNA-binding spans L352–Y418.

Belongs to the class-I aminoacyl-tRNA synthetase family. TyrS type 1 subfamily. Homodimer.

It is found in the cytoplasm. The catalysed reaction is tRNA(Tyr) + L-tyrosine + ATP = L-tyrosyl-tRNA(Tyr) + AMP + diphosphate + H(+). Its function is as follows. Catalyzes the attachment of tyrosine to tRNA(Tyr) in a two-step reaction: tyrosine is first activated by ATP to form Tyr-AMP and then transferred to the acceptor end of tRNA(Tyr). This chain is Tyrosine--tRNA ligase, found in Streptococcus uberis (strain ATCC BAA-854 / 0140J).